We begin with the raw amino-acid sequence, 480 residues long: ATP synthase subunit beta 1 (480 aa).

Residue 154-161 (GGAGVGKT) participates in ATP binding.

Belongs to the ATPase alpha/beta chains family. As to quaternary structure, F-type ATPases have 2 components, CF(1) - the catalytic core - and CF(0) - the membrane proton channel. CF(1) has five subunits: alpha(3), beta(3), gamma(1), delta(1), epsilon(1). CF(0) has four main subunits: a(1), b(1), b'(1) and c(9-12).

It localises to the cell inner membrane. The catalysed reaction is ATP + H2O + 4 H(+)(in) = ADP + phosphate + 5 H(+)(out). In terms of biological role, produces ATP from ADP in the presence of a proton gradient across the membrane. The catalytic sites are hosted primarily by the beta subunits. This Bradyrhizobium sp. (strain BTAi1 / ATCC BAA-1182) protein is ATP synthase subunit beta 1.